We begin with the raw amino-acid sequence, 237 residues long: Undecaprenyl-diphosphatase (237 aa).

7 helical membrane passes run 38 to 58, 65 to 85, 92 to 112, 126 to 146, 166 to 186, 191 to 211, and 217 to 237; these read QTAV…FDGI, WRII…GVLF, LFSS…ILMF, MSFL…FPGI, ALQY…ILGL, VTIL…YVLS, and GKIW…YLVG.

It belongs to the UppP family.

The protein resides in the cell inner membrane. It carries out the reaction di-trans,octa-cis-undecaprenyl diphosphate + H2O = di-trans,octa-cis-undecaprenyl phosphate + phosphate + H(+). In terms of biological role, catalyzes the dephosphorylation of undecaprenyl diphosphate (UPP). Confers resistance to bacitracin. The chain is Undecaprenyl-diphosphatase from Thermotoga sp. (strain RQ2).